The following is a 209-amino-acid chain: CASP-like protein 2A2 (209 aa).

Over 1–37 (MSKTAGVGRLGGARAADAAQQQQLAAGDAAVARAARP) the chain is Cytoplasmic. Residues 38–58 (IETLLRAAPLVLCVAAMTLML) form a helical membrane-spanning segment. Residues 59 to 79 (RDQQSNEYGTVAYSDLGGFKY) are Extracellular-facing. The chain crosses the membrane as a helical span at residues 80–100 (LVYANGLCAAYSLASAFYTAV). Residues 101–109 (PRPATVSRS) lie on the Cytoplasmic side of the membrane. Residues 110-130 (WVVFLLDQVFTYLILAAGAAA) form a helical membrane-spanning segment. At 131 to 161 (AELLYLAYNGDKEVTWSEACGVFGSFCRQAR) the chain is on the extracellular side. Residues 162–182 (ISVAITFGAVLCFILLSLLSS) form a helical membrane-spanning segment. Residues 183 to 209 (YRLFSAYEAPPPSALGSKGVEIAAYPR) lie on the Cytoplasmic side of the membrane.

The protein belongs to the Casparian strip membrane proteins (CASP) family. As to quaternary structure, homodimer and heterodimers.

The protein resides in the cell membrane. This chain is CASP-like protein 2A2, found in Zea mays (Maize).